Reading from the N-terminus, the 917-residue chain is Protein translocase subunit SecA (917 aa).

Residues glutamine 87, 105 to 109 (GEGKT), and aspartate 516 contribute to the ATP site. The Zn(2+) site is built by cysteine 901, cysteine 903, cysteine 912, and histidine 913.

It belongs to the SecA family. Monomer and homodimer. Part of the essential Sec protein translocation apparatus which comprises SecA, SecYEG and auxiliary proteins SecDF-YajC and YidC. Zn(2+) serves as cofactor.

Its subcellular location is the cell inner membrane. The protein resides in the cytoplasm. It carries out the reaction ATP + H2O + cellular proteinSide 1 = ADP + phosphate + cellular proteinSide 2.. Its function is as follows. Part of the Sec protein translocase complex. Interacts with the SecYEG preprotein conducting channel. Has a central role in coupling the hydrolysis of ATP to the transfer of proteins into and across the cell membrane, serving both as a receptor for the preprotein-SecB complex and as an ATP-driven molecular motor driving the stepwise translocation of polypeptide chains across the membrane. This is Protein translocase subunit SecA from Acidovorax sp. (strain JS42).